Consider the following 118-residue polypeptide: Alpha-amylase inhibitor 4 (118 aa).

4 cysteine pairs are disulfide-bonded: Cys7-Cys60, Cys21-Cys49, Cys30-Cys82, and Cys50-Cys101.

Belongs to the protease inhibitor I6 (cereal trypsin/alpha-amylase inhibitor) family.

The protein localises to the secreted. In terms of biological role, alpha-amylase inhibitor. This Sorghum bicolor (Sorghum) protein is Alpha-amylase inhibitor 4.